The primary structure comprises 326 residues: Lipoyl synthase (326 aa).

Residues Cys74, Cys79, Cys85, Cys100, Cys104, Cys107, and Ser314 each contribute to the [4Fe-4S] cluster site. Positions 85–303 constitute a Radical SAM core domain; the sequence is CFGRGTATFM…EEEAYKMGFS (219 aa).

This sequence belongs to the radical SAM superfamily. Lipoyl synthase family. [4Fe-4S] cluster serves as cofactor.

It is found in the cytoplasm. It catalyses the reaction [[Fe-S] cluster scaffold protein carrying a second [4Fe-4S](2+) cluster] + N(6)-octanoyl-L-lysyl-[protein] + 2 oxidized [2Fe-2S]-[ferredoxin] + 2 S-adenosyl-L-methionine + 4 H(+) = [[Fe-S] cluster scaffold protein] + N(6)-[(R)-dihydrolipoyl]-L-lysyl-[protein] + 4 Fe(3+) + 2 hydrogen sulfide + 2 5'-deoxyadenosine + 2 L-methionine + 2 reduced [2Fe-2S]-[ferredoxin]. It functions in the pathway protein modification; protein lipoylation via endogenous pathway; protein N(6)-(lipoyl)lysine from octanoyl-[acyl-carrier-protein]: step 2/2. In terms of biological role, catalyzes the radical-mediated insertion of two sulfur atoms into the C-6 and C-8 positions of the octanoyl moiety bound to the lipoyl domains of lipoate-dependent enzymes, thereby converting the octanoylated domains into lipoylated derivatives. The polypeptide is Lipoyl synthase (Acidovorax ebreus (strain TPSY) (Diaphorobacter sp. (strain TPSY))).